A 515-amino-acid chain; its full sequence is Bifunctional pantoate ligase/cytidylate kinase (515 aa).

Residues 1 to 279 (MKVVETVARL…VGSTRLIDNV (279 aa)) are pantoate--beta-alanine ligase. 31 to 38 (MGALHEGH) is a binding site for ATP. The Proton donor role is filled by His-38. Gln-62 is a (R)-pantoate binding site. Position 62 (Gln-62) interacts with beta-alanine. An ATP-binding site is contributed by 149–152 (GQKD). Gln-155 provides a ligand contact to (R)-pantoate. ATP is bound by residues Val-178 and 186-189 (LSSR). Positions 280–515 (VLGQHHERRP…LYRDKVGGSV (236 aa)) are cytidylate kinase.

It in the N-terminal section; belongs to the pantothenate synthetase family. This sequence in the C-terminal section; belongs to the cytidylate kinase family. Type 1 subfamily.

Its subcellular location is the cytoplasm. It carries out the reaction (R)-pantoate + beta-alanine + ATP = (R)-pantothenate + AMP + diphosphate + H(+). The enzyme catalyses CMP + ATP = CDP + ADP. The catalysed reaction is dCMP + ATP = dCDP + ADP. It participates in cofactor biosynthesis; (R)-pantothenate biosynthesis; (R)-pantothenate from (R)-pantoate and beta-alanine: step 1/1. Catalyzes the condensation of pantoate with beta-alanine in an ATP-dependent reaction via a pantoyl-adenylate intermediate. Its function is as follows. Catalyzes the transfer of a phosphate group from ATP to either CMP or dCMP to form CDP or dCDP and ADP, respectively. In Gloeobacter violaceus (strain ATCC 29082 / PCC 7421), this protein is Bifunctional pantoate ligase/cytidylate kinase.